The primary structure comprises 188 residues: Large ribosomal subunit protein eL18 (188 aa).

Lys119 is covalently cross-linked (Glycyl lysine isopeptide (Lys-Gly) (interchain with G-Cter in SUMO2)). A Phosphoserine modification is found at Ser130. The tract at residues 150–188 (RHFGKAPGTPHSHTKPYVRSKGRKFERARGRRASRGYKN) is disordered. Thr158 carries the post-translational modification Phosphothreonine. Composition is skewed to basic residues over residues 161 to 171 (SHTKPYVRSKG) and 178 to 188 (RGRRASRGYKN). Lys164 is covalently cross-linked (Glycyl lysine isopeptide (Lys-Gly) (interchain with G-Cter in SUMO2)).

Belongs to the eukaryotic ribosomal protein eL18 family. Component of the large ribosomal subunit.

It is found in the cytoplasm. The protein localises to the cytosol. Its subcellular location is the rough endoplasmic reticulum. Functionally, component of the large ribosomal subunit. The ribosome is a large ribonucleoprotein complex responsible for the synthesis of proteins in the cell. This chain is Large ribosomal subunit protein eL18 (RPL18), found in Bos taurus (Bovine).